The sequence spans 434 residues: Methylenetetrahydrofolate--tRNA-(uracil-5-)-methyltransferase TrmFO (434 aa).

10–15 (GAGLAG) contributes to the FAD binding site.

It belongs to the MnmG family. TrmFO subfamily. It depends on FAD as a cofactor.

It is found in the cytoplasm. It carries out the reaction uridine(54) in tRNA + (6R)-5,10-methylene-5,6,7,8-tetrahydrofolate + NADH + H(+) = 5-methyluridine(54) in tRNA + (6S)-5,6,7,8-tetrahydrofolate + NAD(+). It catalyses the reaction uridine(54) in tRNA + (6R)-5,10-methylene-5,6,7,8-tetrahydrofolate + NADPH + H(+) = 5-methyluridine(54) in tRNA + (6S)-5,6,7,8-tetrahydrofolate + NADP(+). Catalyzes the folate-dependent formation of 5-methyl-uridine at position 54 (M-5-U54) in all tRNAs. The chain is Methylenetetrahydrofolate--tRNA-(uracil-5-)-methyltransferase TrmFO from Bacillus cereus (strain ATCC 14579 / DSM 31 / CCUG 7414 / JCM 2152 / NBRC 15305 / NCIMB 9373 / NCTC 2599 / NRRL B-3711).